The chain runs to 393 residues: Phosphoglycerate kinase (393 aa).

Substrate-binding positions include 21-23 (DMN), Arg36, 59-62 (HLGR), Arg114, and Arg147. ATP contacts are provided by residues Lys198, Glu320, and 346 to 349 (GGDT).

This sequence belongs to the phosphoglycerate kinase family. In terms of assembly, monomer.

Its subcellular location is the cytoplasm. It catalyses the reaction (2R)-3-phosphoglycerate + ATP = (2R)-3-phospho-glyceroyl phosphate + ADP. It functions in the pathway carbohydrate degradation; glycolysis; pyruvate from D-glyceraldehyde 3-phosphate: step 2/5. The protein is Phosphoglycerate kinase of Thiobacillus denitrificans (strain ATCC 25259 / T1).